Consider the following 197-residue polypeptide: LexA repressor (197 aa).

The segment at residues 28-47 (VREIARRFRITPRGALLHLI) is a DNA-binding region (H-T-H motif). Active-site for autocatalytic cleavage activity residues include Ser-119 and Lys-156.

It belongs to the peptidase S24 family. Homodimer.

The enzyme catalyses Hydrolysis of Ala-|-Gly bond in repressor LexA.. Represses a number of genes involved in the response to DNA damage (SOS response), including recA and lexA. In the presence of single-stranded DNA, RecA interacts with LexA causing an autocatalytic cleavage which disrupts the DNA-binding part of LexA, leading to derepression of the SOS regulon and eventually DNA repair. This chain is LexA repressor, found in Thermotoga sp. (strain RQ2).